A 65-amino-acid polypeptide reads, in one-letter code: Large ribosomal subunit protein bL35 (65 aa).

This sequence belongs to the bacterial ribosomal protein bL35 family.

In Phytoplasma australiense, this protein is Large ribosomal subunit protein bL35.